We begin with the raw amino-acid sequence, 132 residues long: Pollen allergen Phl p 6 (132 aa).

A signal peptide spans 1 to 22 (MVAMFLAVAVVLGLATSPTAEG).

This sequence belongs to the Poa p IX/Phl p VI allergen family.

The chain is Pollen allergen Phl p 6 (PHLPVI) from Phleum pratense (Common timothy).